A 1764-amino-acid chain; its full sequence is Latent-transforming growth factor beta-binding protein 2 (1764 aa).

Positions 1–35 (MRAPTTVRCSGRIQRARWRGFLPLVLALLMGTSHA) are cleaved as a signal peptide. The tract at residues 80 to 140 (PGLSPSEWNQ…PPAARTAHSV (61 aa)) is disordered. The interval 94-115 (IPGRLAEAEARRPSRAQQLRRV) is heparin-binding. Over residues 108 to 128 (RAQQLRRVQSPVQTRRSNPRG) the composition is skewed to polar residues. Asn-175 carries N-linked (GlcNAc...) asparagine glycosylation. The 33-residue stretch at 181–213 (IKPVCQPPCQNRGSCSRPQLCICRSGFRGARCE) folds into the EGF-like 1 domain. Disulfide bonds link Cys-185–Cys-195, Cys-189–Cys-201, and Cys-203–Cys-212. The interval 220 to 279 (EFDPQNARPVPRRSVEGAPGPHRSSEARGSLVTRIQPLLPPLPPPPSRTLSQTRPLQQHA) is disordered. Positions 226–243 (ARPVPRRSVEGAPGPHRS) are heparin-binding. Over residues 257–266 (LLPPLPPPPS) the composition is skewed to pro residues. Residue Asn-330 is glycosylated (N-linked (GlcNAc...) asparagine). Position 331–341 (331–341 (LTEKIKKIKVV)) interacts with heparin. The EGF-like 2 domain maps to 383–415 (RIYFCQIPCLNGGRCIGRDECWCPANSTGKFCH). Disulfide bonds link Cys-387-Cys-397, Cys-391-Cys-403, and Cys-405-Cys-414. N-linked (GlcNAc...) asparagine glycosylation is present at Asn-408. Residues 484 to 529 (EVDPVPEDNSVETRASHRPHGSSGHSHWASNSIPARAGEAPRPPPV) form a disordered region. Ser-493 carries the post-translational modification Phosphoserine. One can recognise a TB 1 domain in the interval 538–590 (GQCYLSTVNGQCANPLGELTSQEDCCGSVGTSWGVTSCAPCPPRPAFPVIENG). Intrachain disulfides connect Cys-540–Cys-562, Cys-549–Cys-575, and Cys-563–Cys-578. Asn-602 is a glycosylation site (N-linked (GlcNAc...) asparagine). Positions 608–648 (DINECLTLGLCKDSECVNTRGSYLCTCRPGLMLDPSRSRCV) constitute an EGF-like 3; calcium-binding domain. Cystine bridges form between Cys-612/Cys-623, Cys-618/Cys-632, Cys-634/Cys-647, Cys-660/Cys-682, Cys-669/Cys-695, Cys-683/Cys-698, and Cys-684/Cys-710. In terms of domain architecture, TB 2 spans 658–710 (GLCYRSMVSGTCTLPLVQRITKQICCCSRVGKAWGSKCEHCPLPGTEAFREIC). 2 disordered regions span residues 729–759 (KAEE…RQPL) and 786–809 (SAPH…LPGQ). Residues 834–876 (GFDPCFAGASNICGPGTCVKLPNGYRCVCSPGYQLHPSQDYCT) form the EGF-like 4 domain. 45 cysteine pairs are disulfide-bonded: Cys-838–Cys-851, Cys-846–Cys-860, Cys-862–Cys-875, Cys-881–Cys-892, Cys-886–Cys-901, Cys-903–Cys-918, Cys-924–Cys-935, Cys-930–Cys-944, Cys-946–Cys-958, Cys-964–Cys-975, Cys-970–Cys-984, Cys-987–Cys-998, Cys-1004–Cys-1015, Cys-1010–Cys-1024, Cys-1026–Cys-1039, Cys-1045–Cys-1056, Cys-1051–Cys-1065, Cys-1068–Cys-1081, Cys-1087–Cys-1098, Cys-1093–Cys-1107, Cys-1110–Cys-1123, Cys-1129–Cys-1141, Cys-1136–Cys-1150, Cys-1152–Cys-1164, Cys-1170–Cys-1182, Cys-1176–Cys-1191, Cys-1193–Cys-1206, Cys-1212–Cys-1223, Cys-1218–Cys-1232, Cys-1234–Cys-1247, Cys-1253–Cys-1265, Cys-1259–Cys-1274, Cys-1276–Cys-1289, Cys-1295–Cys-1307, Cys-1302–Cys-1316, Cys-1318–Cys-1332, Cys-1359–Cys-1382, Cys-1369–Cys-1394, Cys-1383–Cys-1397, Cys-1435–Cys-1448, Cys-1443–Cys-1457, Cys-1459–Cys-1472, Cys-1478–Cys-1488, Cys-1483–Cys-1497, and Cys-1499–Cys-1512. Positions 877 to 919 (DDNECLRNPCEGRGRCVNSVGSYSCLCYPGYTLATLGDTQECQ) constitute an EGF-like 5; calcium-binding domain. The EGF-like 6; calcium-binding domain maps to 920–959 (DVDECEQPGVCSGGRCSNTEGSYHCECDQGYVMVRRGHCQ). Positions 960 to 999 (DINECRHPGTCPDGRCVNSPGSYTCLACEEGYIGQSGNCV) constitute an EGF-like 7; calcium-binding domain. The 41-residue stretch at 1000-1040 (DMNECLTPGICAHGRCINMEGSFRCSCEPGYELTPDKKGCR) folds into the EGF-like 8; calcium-binding domain. The 42-residue stretch at 1041 to 1082 (DVDECASRASCPTGLCLNTEGSFTCSACQSGYWVNEDGTACE) folds into the EGF-like 9; calcium-binding domain. The EGF-like 10; calcium-binding domain maps to 1083–1124 (DLDECAFPGVCPTGVCTNTVGSFSCKDCDRGFRPSPLGNSCE). The EGF-like 11; calcium-binding domain occupies 1125 to 1165 (DVDECEGPQNSCLGGECKNTDGSYQCLCPQGFQLANGTVCE). Asn-1160 carries an N-linked (GlcNAc...) asparagine glycan. Residues 1166 to 1207 (DVDECVGEEHCAPHGECLNSPGSFFCLCAPGFASAEGGTRCQ) form the EGF-like 12; calcium-binding domain. One can recognise an EGF-like 13; calcium-binding domain in the interval 1208–1248 (DVDECATTEPCLGGHCVNTEGSFNCLCETGFQPAPDSGECV). Positions 1249–1290 (DIDECANDTVCGNHGFCDNTDGSFRCLCDQGFETSPSGWECV) constitute an EGF-like 15; calcium-binding domain. Asn-1255 is a glycosylation site (N-linked (GlcNAc...) asparagine). In terms of domain architecture, EGF-like 16; calcium-binding spans 1291 to 1333 (DVNECELMLAVCGDALCENVEGSFLCLCASDLEEYDAEEGHCR). The region spanning 1357–1409 (MECYAEHNGGPPCSQILGQNSTQAECCSTQGARWGETCDPCPSEDSVEFSELC) is the TB 3 domain. N-linked (GlcNAc...) asparagine glycosylation occurs at Asn-1376. The EGF-like 17; calcium-binding domain maps to 1431-1473 (DADECILFGPALCQNGRCLNTVPGYICLCNPGYHYDAVSRKCQ). One can recognise an EGF-like 18; calcium-binding domain in the interval 1474 to 1513 (DHNECQDLACENGECVNTEGSFHCFCSPPLILDLSGQRCV). Residue Asn-1514 is glycosylated (N-linked (GlcNAc...) asparagine). A TB 4 domain is found at 1530–1582 (DICWKKVTNDVCSQPLRGHHTTYTECCCQDGEAWSQQCALCPPRSSEVYAQLC). Intrachain disulfides connect Cys-1532/Cys-1555, Cys-1541/Cys-1567, Cys-1556/Cys-1570, Cys-1557/Cys-1582, Cys-1680/Cys-1691, Cys-1686/Cys-1700, Cys-1702/Cys-1715, Cys-1721/Cys-1736, Cys-1731/Cys-1745, and Cys-1747/Cys-1760. Residues 1585–1764 (ARIEAEREAG…PGPPHCAAKE (180 aa)) are C-terminal domain. An EGF-like 19; calcium-binding domain is found at 1676-1716 (QAEECGILNGCENGRCVRVREGYTCDCFEGFQLDTALMACV). In terms of domain architecture, EGF-like 20; calcium-binding spans 1717-1761 (DVNECEDLNGAARLCAHGHCENTEGSYRCHCSPGYVAEPGPPHCA).

Belongs to the LTBP family. Forms part of the large latent transforming growth factor beta precursor complex; removal is essential for activation of complex. Interacts with SDC4. Interacts (via C-terminal domain) with FBN1 (via N-terminal domain) in a Ca(+2)-dependent manner. In terms of processing, N-Glycosylated. Post-translationally, contains hydroxylated asparagine residues. In terms of tissue distribution, expressed in cortical astrocytes and glioma cells. Expression is up-regulated by TGFB1.

Its subcellular location is the secreted. It localises to the extracellular space. The protein resides in the extracellular matrix. In terms of biological role, may play an integral structural role in elastic-fiber architectural organization and/or assembly. In Rattus norvegicus (Rat), this protein is Latent-transforming growth factor beta-binding protein 2 (Ltbp2).